A 282-amino-acid polypeptide reads, in one-letter code: RIO-type serine/threonine-protein kinase Rio2 (282 aa).

Positions 92 to 282 (DAIGKLMGEG…NSAIDRILQE (191 aa)) constitute a Protein kinase domain. Residues 98–106 (MGEGKESAV), K120, and H126 contribute to the ATP site. Residue E103 coordinates Mg(2+). S128 carries the post-translational modification Phosphoserine; by autocatalysis. 180–186 (ELIDAKE) is an ATP binding site. D218 functions as the Proton acceptor in the catalytic mechanism. The ATP site is built by Y222, N223, and D235. 2 residues coordinate Mg(2+): N223 and D235.

The protein belongs to the protein kinase superfamily. RIO-type Ser/Thr kinase family. As to quaternary structure, monomer. The cofactor is Mg(2+). Requires Mn(2+) as cofactor. Post-translationally, autophosphorylated.

It carries out the reaction L-seryl-[protein] + ATP = O-phospho-L-seryl-[protein] + ADP + H(+). The catalysed reaction is L-threonyl-[protein] + ATP = O-phospho-L-threonyl-[protein] + ADP + H(+). The sequence is that of RIO-type serine/threonine-protein kinase Rio2 (rio2) from Archaeoglobus fulgidus (strain ATCC 49558 / DSM 4304 / JCM 9628 / NBRC 100126 / VC-16).